The following is a 206-amino-acid chain: Protein phosphatase inhibitor 2 (206 aa).

The segment at 1-36 (MAASTASHRPIKGILKNKTSAASPPVVPSAEQPRPI) is disordered. Ala-2 is subject to N-acetylalanine. The tract at residues 12-17 (KGILKN) is required for binding PPP1CC. The required for binding the 'RVXF' binding groove of PPP1CC stretch occupies residues 44-56 (KSQKWDEMNILAT). Ser-45 bears the Phosphoserine; by ATM mark. Thr-74 is modified (phosphothreonine). A disordered region spans residues 75-143 (PYHNMIGDDE…EREKKRQFEM (69 aa)). Acidic residues predominate over residues 81–92 (GDDEDAYSDSEG). 2 positions are modified to phosphoserine: Ser-88 and Ser-90. Residues Thr-97 and Thr-117 each carry the phosphothreonine modification. Residues 111–121 (SEPKYRTREQE) show a composition bias toward basic and acidic residues. 3 positions are modified to phosphoserine: Ser-122, Ser-123, and Ser-131. Residues 122–131 (SSGEEDNDLS) show a composition bias toward acidic residues. Positions 132-143 (PEEREKKRQFEM) are enriched in basic and acidic residues. The required for binding PPP1CC catalytic center, displacing metal ions and inhibition of PPP1CC catalytic activity stretch occupies residues 148-151 (HYNE). Residues 164-206 (KDLHDDDEDEEMAETADGDSMNVEESSQGSTTSDHLQHKSQSS) form a disordered region. Over residues 168-180 (DDDEDEEMAETAD) the composition is skewed to acidic residues. Polar residues predominate over residues 186–206 (VEESSQGSTTSDHLQHKSQSS).

It belongs to the protein phosphatase inhibitor 2 family. In terms of assembly, heterodimer with PP1. In terms of processing, phosphorylation on Ser-45 by ATM activates PP1 by dissociating the PP1-PPP1R2 complex. Phosphorylation on Thr-74 by GSK3 activates PP1 by dissociating the PP1-PPP1R2 complex.

Its function is as follows. Inhibitor of protein-phosphatase 1. This is Protein phosphatase inhibitor 2 (Ppp1r2) from Mus musculus (Mouse).